Here is a 267-residue protein sequence, read N- to C-terminus: Undecaprenyl-diphosphatase (267 aa).

Helical transmembrane passes span 5–25 (TIVAAALGLLEGLTEFIPVSS), 45–65 (FEVLIQLGAIMAILGVYAGRL), 82–102 (ILAVLLAFLPAVVIGVLAHRI), 108–128 (FETPTLIAVMLIVGGVVLLFV), 143–163 (FPLPMALKIGFIQCLAMIPGV), 183–203 (AAEFSFFLSMPTMLGAFVYDL), 213–233 (AATGNIVIGFVCAFLAAVVVV), and 243–263 (YGYGLFAWWRIAVGVAVLLAL).

It belongs to the UppP family.

It is found in the cell inner membrane. It carries out the reaction di-trans,octa-cis-undecaprenyl diphosphate + H2O = di-trans,octa-cis-undecaprenyl phosphate + phosphate + H(+). In terms of biological role, catalyzes the dephosphorylation of undecaprenyl diphosphate (UPP). Confers resistance to bacitracin. This chain is Undecaprenyl-diphosphatase, found in Paracoccus denitrificans (strain Pd 1222).